Here is a 342-residue protein sequence, read N- to C-terminus: Phosphate acyltransferase (342 aa).

The protein belongs to the PlsX family. In terms of assembly, homodimer. Probably interacts with PlsY.

It localises to the cytoplasm. It catalyses the reaction a fatty acyl-[ACP] + phosphate = an acyl phosphate + holo-[ACP]. The protein operates within lipid metabolism; phospholipid metabolism. Catalyzes the reversible formation of acyl-phosphate (acyl-PO(4)) from acyl-[acyl-carrier-protein] (acyl-ACP). This enzyme utilizes acyl-ACP as fatty acyl donor, but not acyl-CoA. The chain is Phosphate acyltransferase from Legionella pneumophila (strain Paris).